Here is a 909-residue protein sequence, read N- to C-terminus: Valine--tRNA ligase (909 aa).

The short motif at 52-62 is the 'HIGH' region element; it reads PNVTGVLHVGH. Positions 542–546 match the 'KMSKS' region motif; it reads KMSKS. Lysine 545 serves as a coordination point for ATP. Positions 843–902 form a coiled coil; that stretch reads IDIDQLKKRFEKELEKNEQNASKIDSKLKNENFVKNAPPEVIEGEKEKHAEFLRRIEKLK.

This sequence belongs to the class-I aminoacyl-tRNA synthetase family. ValS type 1 subfamily. In terms of assembly, monomer.

Its subcellular location is the cytoplasm. It catalyses the reaction tRNA(Val) + L-valine + ATP = L-valyl-tRNA(Val) + AMP + diphosphate. Functionally, catalyzes the attachment of valine to tRNA(Val). As ValRS can inadvertently accommodate and process structurally similar amino acids such as threonine, to avoid such errors, it has a 'posttransfer' editing activity that hydrolyzes mischarged Thr-tRNA(Val) in a tRNA-dependent manner. In Treponema denticola (strain ATCC 35405 / DSM 14222 / CIP 103919 / JCM 8153 / KCTC 15104), this protein is Valine--tRNA ligase.